A 109-amino-acid polypeptide reads, in one-letter code: uncharacterized protein (109 aa).

Residues 78–98 (YTCIMYIGLLCMFVLLYMTVI) form a helical membrane-spanning segment.

It localises to the membrane. This is an uncharacterized protein from Saccharomyces cerevisiae (strain ATCC 204508 / S288c) (Baker's yeast).